The chain runs to 747 residues: DNA repair and recombination protein RAD54-like (747 aa).

Residues 1–41 (MRRSLAPSQLAKRKPEGRSCDDEDWQPGLVTPRKRKSSSET) form a disordered region. Residues 2–9 (RRSLAPSQ) are required for chromatin remodeling, strand pairing activities and coupling of ATPase activity. S38 carries the phosphoserine modification. The Helicase ATP-binding domain occupies 170–345 (SRRIPGSHGC…FSLVHFVNSG (176 aa)). 183-190 (DEMGLGKT) contacts ATP. The DEGH box signature appears at 296 to 299 (DEGH). The 154-residue stretch at 500 to 653 (VLDYILAVTR…CVVDEEQDVE (154 aa)) folds into the Helicase C-terminal domain. K515 carries the post-translational modification N6-acetyllysine. S572 carries the phosphoserine; by NEK1 modification.

Belongs to the SNF2/RAD54 helicase family. In terms of assembly, homohexamer. Interacts (via N-terminus) with RAD51. Interacts with NAP1L1. Interacts with BRD9; this interaction orchestrates RAD51-RAD54 complex formation. Post-translationally, acetylated. Acetylation promotes interaction with BRD9, and subsequently with RAD54, which is essential for homologous recombination (HR). Phosphorylated. Phosphorylation at Ser-572 by NEK1 specifically in G2 phase allows efficient removal of RAD51 filaments from DNA.

The protein resides in the nucleus. The enzyme catalyses ATP + H2O = ADP + phosphate + H(+). Its function is as follows. Plays an essential role in homologous recombination (HR) which is a major pathway for repairing DNA double-strand breaks (DSBs), single-stranded DNA (ssDNA) gaps, and stalled or collapsed replication forks. Acts as a molecular motor during the homology search and guides RAD51 ssDNA along a donor dsDNA thereby changing the homology search from the diffusion-based mechanism to a motor-guided mechanism. Also plays an essential role in RAD51-mediated synaptic complex formation which consists of three strands encased in a protein filament formed once homology is recognized. Once DNA strand exchange occured, dissociates RAD51 from nucleoprotein filaments formed on dsDNA. In Homo sapiens (Human), this protein is DNA repair and recombination protein RAD54-like (RAD54L).